The chain runs to 150 residues: Aspartate 1-decarboxylase (150 aa).

Serine 25 functions as the Schiff-base intermediate with substrate; via pyruvic acid in the catalytic mechanism. Serine 25 carries the pyruvic acid (Ser) modification. Threonine 57 is a binding site for substrate. The active-site Proton donor is the tyrosine 58. 73-75 serves as a coordination point for substrate; it reads GAA.

The protein belongs to the PanD family. As to quaternary structure, heterooctamer of four alpha and four beta subunits. It depends on pyruvate as a cofactor. Is synthesized initially as an inactive proenzyme, which is activated by self-cleavage at a specific serine bond to produce a beta-subunit with a hydroxyl group at its C-terminus and an alpha-subunit with a pyruvoyl group at its N-terminus.

The protein localises to the cytoplasm. It catalyses the reaction L-aspartate + H(+) = beta-alanine + CO2. The protein operates within cofactor biosynthesis; (R)-pantothenate biosynthesis; beta-alanine from L-aspartate: step 1/1. Functionally, catalyzes the pyruvoyl-dependent decarboxylation of aspartate to produce beta-alanine. This chain is Aspartate 1-decarboxylase, found in Kocuria rhizophila (strain ATCC 9341 / DSM 348 / NBRC 103217 / DC2201).